A 1799-amino-acid chain; its full sequence is Bromodomain and WD repeat-containing protein 3 (1799 aa).

8 WD repeats span residues 170–209 (IKMH…IWAT), 213–251 (RLLA…VWCL), 255–297 (APVA…FWQW), 307–347 (RPVK…IYYL), 353–393 (EKIA…IWQY), 400–452 (SIVL…VWNS), 456–495 (QLLH…IWDL), and 502–542 (RNYF…LFGF). Ser-693 carries the post-translational modification Phosphoserine. Positions 766 to 912 (KKPSYPIQRN…KKKKGGLVSM (147 aa)) are disordered. The segment covering 784–794 (SLRRTQRKRQH) has biased composition (basic residues). Positions 795–816 (TYLTRSNIEHNSQASSQTSGVQ) are enriched in polar residues. The segment covering 817–828 (EDSDSSSEEDET) has biased composition (acidic residues). Low complexity predominate over residues 845–858 (SESSSSDSSSEYSD). Over residues 875-884 (RQATQKIYSS) the composition is skewed to polar residues. Phosphoserine is present on residues Ser-884 and Ser-885. Residues 897 to 907 (KKPKQTKKKKG) show a composition bias toward basic residues. Positions 1136-1243 (WGAHSRDEEC…DVLLRFIGDQ (108 aa)) constitute a Bromo 1 domain. 4 disordered regions span residues 1258–1291 (EDPD…KCRG), 1321–1366 (EPFR…IDTP), 1435–1482 (IQSQ…QNTS), and 1517–1723 (SPSS…AKRA). The segment covering 1260–1276 (PDSSDLEEDSEMVDLDS) has biased composition (acidic residues). One can recognise a Bromo 2 domain in the interval 1298 to 1427 (CNPDAWKKQC…ALFENHIKNI (130 aa)). Low complexity predominate over residues 1333 to 1348 (PVQQQQEGESSQSVPP). A compositionally biased stretch (basic residues) spans 1438–1450 (QKRRRPRYRKRLR). Low complexity-rich tracts occupy residues 1451 to 1463 (SSSS…RAPS) and 1517 to 1530 (SPSS…SGNS). Ser-1574 and Ser-1576 each carry phosphoserine. Residues 1584–1596 (GEEKEMKETKEQV) show a composition bias toward basic and acidic residues. A compositionally biased stretch (low complexity) spans 1598–1623 (LSSSESGELGSSLSSESTSGSDSDSE). Residues 1624-1640 (STSRTDQDYVDGDHDYS) are compositionally biased toward basic and acidic residues. 2 stretches are compositionally biased toward basic residues: residues 1646–1663 (RPKR…RNWK) and 1681–1694 (RGGR…RGGR). At Ser-1760 the chain carries Phosphoserine.

Functionally, plays a role in the regulation of cell morphology and cytoskeletal organization. Required in the control of cell shape. This Mus musculus (Mouse) protein is Bromodomain and WD repeat-containing protein 3 (Brwd3).